We begin with the raw amino-acid sequence, 131 residues long: Large ribosomal subunit protein bL17 (131 aa).

It belongs to the bacterial ribosomal protein bL17 family. As to quaternary structure, part of the 50S ribosomal subunit. Contacts protein L32.

The sequence is that of Large ribosomal subunit protein bL17 from Nitrosospira multiformis (strain ATCC 25196 / NCIMB 11849 / C 71).